The following is a 79-amino-acid chain: Acyl carrier protein (79 aa).

The region spanning 2–77 (ENIEQRVKKI…QAIDYVTAHL (76 aa)) is the Carrier domain. The residue at position 37 (serine 37) is an O-(pantetheine 4'-phosphoryl)serine.

Belongs to the acyl carrier protein (ACP) family. In terms of processing, 4'-phosphopantetheine is transferred from CoA to a specific serine of apo-ACP by AcpS. This modification is essential for activity because fatty acids are bound in thioester linkage to the sulfhydryl of the prosthetic group.

It is found in the cytoplasm. Its pathway is lipid metabolism; fatty acid biosynthesis. Functionally, carrier of the growing fatty acid chain in fatty acid biosynthesis. This chain is Acyl carrier protein, found in Laribacter hongkongensis (strain HLHK9).